The sequence spans 522 residues: Cell polarity protein mod5 (522 aa).

5 disordered regions span residues Met-1–Asp-83, Lys-119–Asn-158, Arg-170–Ala-192, Pro-251–Pro-285, and Tyr-300–Lys-516. 3 stretches are compositionally biased toward polar residues: residues Pro-27–Ser-46, Leu-66–Ser-76, and Asn-131–Glu-146. Residue Ser-43 is modified to Phosphoserine. The span at Pro-258–Pro-285 shows a compositional bias: low complexity. Ser-303 is modified (phosphoserine). Positions Lys-308–Lys-318 are enriched in basic and acidic residues. A compositionally biased stretch (polar residues) spans Gly-335–Asp-349. Ser-350 is modified (phosphoserine). 2 stretches are compositionally biased toward polar residues: residues Asn-363–Asn-396 and Asp-404–Val-431. A compositionally biased stretch (low complexity) spans Ser-439–Leu-452. 2 stretches are compositionally biased toward basic and acidic residues: residues His-472–Arg-482 and Pro-495–Lys-516.

As to quaternary structure, interacts with tea1 and tea3.

It is found in the cell membrane. Its function is as follows. With tea1, acts in a positive-feedback loop in the microtubule-mediated regulation of cell polarity. Involved in the anchoring of tea1 at the cortex as well as the correct localization of tea3. The protein is Cell polarity protein mod5 (mod5) of Schizosaccharomyces pombe (strain 972 / ATCC 24843) (Fission yeast).